The primary structure comprises 440 residues: Protein translocase subunit SecY (440 aa).

A run of 10 helical transmembrane segments spans residues 17 to 37 (IFFT…PSPG), 74 to 94 (IFAI…LLTV), 116 to 135 (YTRY…IVAL), 155 to 175 (FFDL…VMWM), 178 to 198 (LITE…GIAT), 213 to 233 (GVVF…VVFV), 270 to 290 (VIPV…TQIV), 316 to 336 (WQYI…YVSV), 374 to 394 (LLFV…IMLD), and 403 to 423 (GATP…LTTV).

This sequence belongs to the SecY/SEC61-alpha family. As to quaternary structure, component of the Sec protein translocase complex. Heterotrimer consisting of SecY, SecE and SecG subunits. The heterotrimers can form oligomers, although 1 heterotrimer is thought to be able to translocate proteins. Interacts with the ribosome. Interacts with SecDF, and other proteins may be involved. Interacts with SecA.

The protein localises to the cell membrane. In terms of biological role, the central subunit of the protein translocation channel SecYEG. Consists of two halves formed by TMs 1-5 and 6-10. These two domains form a lateral gate at the front which open onto the bilayer between TMs 2 and 7, and are clamped together by SecE at the back. The channel is closed by both a pore ring composed of hydrophobic SecY resides and a short helix (helix 2A) on the extracellular side of the membrane which forms a plug. The plug probably moves laterally to allow the channel to open. The ring and the pore may move independently. The polypeptide is Protein translocase subunit SecY (Corynebacterium glutamicum (strain ATCC 13032 / DSM 20300 / JCM 1318 / BCRC 11384 / CCUG 27702 / LMG 3730 / NBRC 12168 / NCIMB 10025 / NRRL B-2784 / 534)).